The primary structure comprises 406 residues: Tryptophan synthase beta chain (406 aa).

K99 is subject to N6-(pyridoxal phosphate)lysine.

This sequence belongs to the TrpB family. In terms of assembly, tetramer of two alpha and two beta chains. The cofactor is pyridoxal 5'-phosphate.

It catalyses the reaction (1S,2R)-1-C-(indol-3-yl)glycerol 3-phosphate + L-serine = D-glyceraldehyde 3-phosphate + L-tryptophan + H2O. It participates in amino-acid biosynthesis; L-tryptophan biosynthesis; L-tryptophan from chorismate: step 5/5. Its function is as follows. The beta subunit is responsible for the synthesis of L-tryptophan from indole and L-serine. Essential for production of nod factors and establishment of symbiosis. In Rhizobium etli (strain ATCC 51251 / DSM 11541 / JCM 21823 / NBRC 15573 / CFN 42), this protein is Tryptophan synthase beta chain.